Reading from the N-terminus, the 484-residue chain is Glutamyl-tRNA(Gln) amidotransferase subunit A (484 aa).

Residues lysine 76 and serine 151 each act as charge relay system in the active site. The Acyl-ester intermediate role is filled by serine 175.

This sequence belongs to the amidase family. GatA subfamily. In terms of assembly, heterotrimer of A, B and C subunits.

The enzyme catalyses L-glutamyl-tRNA(Gln) + L-glutamine + ATP + H2O = L-glutaminyl-tRNA(Gln) + L-glutamate + ADP + phosphate + H(+). In terms of biological role, allows the formation of correctly charged Gln-tRNA(Gln) through the transamidation of misacylated Glu-tRNA(Gln) in organisms which lack glutaminyl-tRNA synthetase. The reaction takes place in the presence of glutamine and ATP through an activated gamma-phospho-Glu-tRNA(Gln). The protein is Glutamyl-tRNA(Gln) amidotransferase subunit A of Cellvibrio japonicus (strain Ueda107) (Pseudomonas fluorescens subsp. cellulosa).